The following is a 309-amino-acid chain: Protein FdhE (309 aa).

This sequence belongs to the FdhE family.

It is found in the cytoplasm. Functionally, necessary for formate dehydrogenase activity. In Salmonella dublin (strain CT_02021853), this protein is Protein FdhE.